The primary structure comprises 140 residues: Nucleoside diphosphate kinase (140 aa).

Residues Lys11, Phe59, Arg87, Thr93, Arg104, and Asn114 each contribute to the ATP site. The Pros-phosphohistidine intermediate role is filled by His117.

Belongs to the NDK family. In terms of assembly, homotetramer. Requires Mg(2+) as cofactor.

The protein localises to the cytoplasm. It carries out the reaction a 2'-deoxyribonucleoside 5'-diphosphate + ATP = a 2'-deoxyribonucleoside 5'-triphosphate + ADP. The enzyme catalyses a ribonucleoside 5'-diphosphate + ATP = a ribonucleoside 5'-triphosphate + ADP. In terms of biological role, major role in the synthesis of nucleoside triphosphates other than ATP. The ATP gamma phosphate is transferred to the NDP beta phosphate via a ping-pong mechanism, using a phosphorylated active-site intermediate. The sequence is that of Nucleoside diphosphate kinase from Rickettsia conorii (strain ATCC VR-613 / Malish 7).